The sequence spans 67 residues: Large ribosomal subunit protein bL35 (67 aa).

It belongs to the bacterial ribosomal protein bL35 family.

This Bartonella quintana (strain Toulouse) (Rochalimaea quintana) protein is Large ribosomal subunit protein bL35.